The chain runs to 386 residues: CRISPR system endoribonuclease Csm6' (386 aa).

Residues 1-146 are CARF domain; that stretch reads MRVLISAVGD…ASNENIGHDN (146 aa). The segment at 147-386 is HEPN domain; that stretch reads DENIDELIEV…LNKILLTKLN (240 aa).

Belongs to the CRISPR-associated Csm6 family. Homodimer. The composite ssRNase active site is formed at the dimer interface.

Non-specific ssRNase activity is stimulated about 1000-fold by cyclic oligoadenylate (cOA), a second messenger produced by Cas10 of the ternary Csm effector complex in the presence of a cognate target RNA. Functionally, CRISPR (clustered regularly interspaced short palindromic repeat) is an adaptive immune system that provides protection against mobile genetic elements (viruses, transposable elements and conjugative plasmids). CRISPR clusters contain spacers, sequences complementary to antecedent mobile elements, and target invading nucleic acids. CRISPR clusters are transcribed and processed into CRISPR RNA (crRNA). The type III-A Csm complex binds crRNA and acts as a crRNA-guided RNase, DNase and cyclic oligoadenylate synthase; binding of target RNA cognate to the crRNA is required for all activities. In a heterologous host this Csm effector complex restricts ssRNA phage MS2, suggesting it may target RNA viruses in vivo. This protein is not part of the Csm complex. Its function is as follows. Csm functions as a non-specific ssDNase. Base-pairing between crRNA and target RNA to form a ternary Csm complex activates a ssDNase activity; target RNA cleavage suppresses the ssDNase, a temporal control that prevents uncontrolled DNA degradation. Viral RNA transcripts probably tether the Csm complex to the viral genome, recruiting Cas10 ssDNA activity which is able to degrade DNA in the transcription bubble, spatially controlling the DNase activity. A single-strand-specific endoribonuclease (ssRNase) that is approximately 1000-fold stimulated by cyclic oligoadenylate (cOA); although several species of cOA are synthesized by this organism only cyclic hexaadenylate (cA6) stimulates the ssRNase activity. Cleaves preferentially within GA or AA dinucleotides, although the presence of cA6 broadens the preference. This Streptococcus thermophilus protein is CRISPR system endoribonuclease Csm6'.